The primary structure comprises 443 residues: 23S rRNA (uracil(1939)-C(5))-methyltransferase RlmD (443 aa).

Positions 4 to 66 (QNRFDRTSFQ…RHFDEARVVE (63 aa)) constitute a TRAM domain. Residues cysteine 79, cysteine 85, cysteine 88, and cysteine 167 each contribute to the [4Fe-4S] cluster site. Glutamine 275, phenylalanine 304, asparagine 309, glutamate 325, aspartate 352, and aspartate 373 together coordinate S-adenosyl-L-methionine. Cysteine 399 (nucleophile) is an active-site residue.

This sequence belongs to the class I-like SAM-binding methyltransferase superfamily. RNA M5U methyltransferase family. RlmD subfamily.

The catalysed reaction is uridine(1939) in 23S rRNA + S-adenosyl-L-methionine = 5-methyluridine(1939) in 23S rRNA + S-adenosyl-L-homocysteine + H(+). In terms of biological role, catalyzes the formation of 5-methyl-uridine at position 1939 (m5U1939) in 23S rRNA. The polypeptide is 23S rRNA (uracil(1939)-C(5))-methyltransferase RlmD (Xylella fastidiosa (strain Temecula1 / ATCC 700964)).